The chain runs to 301 residues: MDERLGELVTERRSPDSAELDRMGTGELVRLMAREEARVPEAVARQAPRMAAAIDAVVERLRAGGRLIYVGAGTAGRVGVLDAVECGPTFGVPPGRVVGVIAGGREAMFDPRESAEDSAEAGASDLDRLCVGPEDAVVGVSASGRTPYTLGAVRRARERGALTVGLSCNPGSRLSDIVDHPLEVVVGPEVLAGSTRLKAGSAQKLVLNMISTISMVRLGKTYGNLMVDVRASNAKLRDRARRIVELATGAPPEEAAAALDRCGGEAKVAIVALLLGVGPDEARRRLAAGSVRAALGEGRRP.

The region spanning 57 to 220 (VVERLRAGGR…STISMVRLGK (164 aa)) is the SIS domain. Glu-85 functions as the Proton donor in the catalytic mechanism. Glu-116 is a catalytic residue.

The protein belongs to the GCKR-like family. MurNAc-6-P etherase subfamily. As to quaternary structure, homodimer.

The catalysed reaction is N-acetyl-D-muramate 6-phosphate + H2O = N-acetyl-D-glucosamine 6-phosphate + (R)-lactate. It functions in the pathway amino-sugar metabolism; N-acetylmuramate degradation. In terms of biological role, specifically catalyzes the cleavage of the D-lactyl ether substituent of MurNAc 6-phosphate, producing GlcNAc 6-phosphate and D-lactate. The chain is N-acetylmuramic acid 6-phosphate etherase from Rubrobacter xylanophilus (strain DSM 9941 / JCM 11954 / NBRC 16129 / PRD-1).